Here is a 2596-residue protein sequence, read N- to C-terminus: Protein unc-79 homolog (2596 aa).

Residues Ser754 and Ser758 each carry the phosphoserine modification. Disordered regions lie at residues 907 to 931 (GPEG…TVPS), 1539 to 1573 (SQRQ…GFQE), 1594 to 1632 (VDSP…DSDS), 1648 to 1679 (EEEE…SVLS), 1695 to 1832 (KDFS…FKIQ), and 1863 to 1909 (LGEQ…KQIQ). Over residues 1594–1606 (VDSPGKPAPREDL) the composition is skewed to basic and acidic residues. A compositionally biased stretch (low complexity) spans 1662–1679 (GNNAASSPSIPSQPSVLS). The span at 1704-1713 (NHQSASNEDS) shows a compositional bias: polar residues. Positions 1726–1735 (ELSKSEELRE) are enriched in basic and acidic residues. Over residues 1897-1908 (ETSSHSSISKQI) the composition is skewed to polar residues. Helical transmembrane passes span 2184–2204 (LLSF…ELCG) and 2426–2446 (CVLH…WTVY).

Belongs to the unc-79 family. NALCN complex consists of NALCN and auxiliary subunits, UNC79, UNC80 and NACL1. These auxiliary subunits are essential for the NALCN channel function. UNC80 bridges NALCN to UNC79. Interacts with NALCN. Interacts with UNC80.

The protein localises to the cell membrane. Functionally, auxiliary subunit of the NALCN sodium channel complex. The NALCN sodium channel complex is a voltage-gated ion channel responsible for the resting Na(+) permeability that controls neuronal excitability. Activated by neuropeptides substance P, neurotensin, and extracellular calcium that regulates neuronal excitability by controlling the sizes of NALCN-dependent sodium-leak current. This Mus musculus (Mouse) protein is Protein unc-79 homolog (Unc79).